We begin with the raw amino-acid sequence, 280 residues long: 23S rRNA (guanine(748)-N(1))-methyltransferase (280 aa).

Zn(2+) is bound by residues Cys-11, Cys-14, Cys-27, and His-31. Residues Tyr-70, 100-101, and His-188 each bind S-adenosyl-L-methionine; that span reads TG.

This sequence belongs to the methyltransferase superfamily. RlmA family.

The enzyme catalyses guanosine(748) in 23S rRNA + S-adenosyl-L-methionine = N(1)-methylguanosine(748) in 23S rRNA + S-adenosyl-L-homocysteine + H(+). Specifically methylates the guanosine in position 748 of 23S rRNA. Confers resistance to the macrolide antibiotic tylosine. This Streptomyces fradiae (Streptomyces roseoflavus) protein is 23S rRNA (guanine(748)-N(1))-methyltransferase (rlmAII).